Reading from the N-terminus, the 198-residue chain is Peptidyl-tRNA hydrolase (198 aa).

Tyr-15 serves as a coordination point for tRNA. The active-site Proton acceptor is His-20. Residues Phe-66, Asn-68, and Asn-114 each coordinate tRNA.

The protein belongs to the PTH family. As to quaternary structure, monomer.

The protein resides in the cytoplasm. It catalyses the reaction an N-acyl-L-alpha-aminoacyl-tRNA + H2O = an N-acyl-L-amino acid + a tRNA + H(+). Its function is as follows. Hydrolyzes ribosome-free peptidyl-tRNAs (with 1 or more amino acids incorporated), which drop off the ribosome during protein synthesis, or as a result of ribosome stalling. In terms of biological role, catalyzes the release of premature peptidyl moieties from peptidyl-tRNA molecules trapped in stalled 50S ribosomal subunits, and thus maintains levels of free tRNAs and 50S ribosomes. This chain is Peptidyl-tRNA hydrolase, found in Cupriavidus necator (strain ATCC 17699 / DSM 428 / KCTC 22496 / NCIMB 10442 / H16 / Stanier 337) (Ralstonia eutropha).